Reading from the N-terminus, the 105-residue chain is Thiosulfate sulfurtransferase GlpE (105 aa).

A Rhodanese domain is found at 15-103 (MQQGAILVDI…WCRAELPIDT (89 aa)). The active-site Cysteine persulfide intermediate is Cys63.

This sequence belongs to the GlpE family.

It is found in the cytoplasm. It carries out the reaction thiosulfate + hydrogen cyanide = thiocyanate + sulfite + 2 H(+). The catalysed reaction is thiosulfate + [thioredoxin]-dithiol = [thioredoxin]-disulfide + hydrogen sulfide + sulfite + 2 H(+). In terms of biological role, transferase that catalyzes the transfer of sulfur from thiosulfate to thiophilic acceptors such as cyanide or dithiols. May function in a CysM-independent thiosulfate assimilation pathway by catalyzing the conversion of thiosulfate to sulfite, which can then be used for L-cysteine biosynthesis. The sequence is that of Thiosulfate sulfurtransferase GlpE from Haemophilus influenzae (strain PittEE).